The primary structure comprises 256 residues: tRNA-cytidine(32) 2-sulfurtransferase (256 aa).

A PP-loop motif motif is present at residues 35 to 40 (SGGKDS). [4Fe-4S] cluster-binding residues include Cys-110, Cys-113, and Cys-201.

This sequence belongs to the TtcA family. In terms of assembly, homodimer. Mg(2+) serves as cofactor. [4Fe-4S] cluster is required as a cofactor.

The protein localises to the cytoplasm. It carries out the reaction cytidine(32) in tRNA + S-sulfanyl-L-cysteinyl-[cysteine desulfurase] + AH2 + ATP = 2-thiocytidine(32) in tRNA + L-cysteinyl-[cysteine desulfurase] + A + AMP + diphosphate + H(+). The protein operates within tRNA modification. Its function is as follows. Catalyzes the ATP-dependent 2-thiolation of cytidine in position 32 of tRNA, to form 2-thiocytidine (s(2)C32). The sulfur atoms are provided by the cysteine/cysteine desulfurase (IscS) system. This chain is tRNA-cytidine(32) 2-sulfurtransferase, found in Coxiella burnetii (strain RSA 331 / Henzerling II).